We begin with the raw amino-acid sequence, 432 residues long: MPVLNLKSGFADADDLDTLMAGIGRRARAAGRAMALAPAQTKDLALRAIAEQIRASAATILRENARDVSAAQAAGQTKAIIDRLTLDEGRVAAIAEAVEKVASLPDPVGRQLAAFERPNGLLIERISVPLGVVGVIFESRPNVTADAGALCLKAGNAAILRAGSDSHRTATAIAAAMSEGLARTGLPADAIQLVPTRDRAAVGLMLTGLGGCVDVIVPRGGRSLVERVQAEAKVPVFAHLDGICHVYIAEGADLGMARTVLLNSKMRRTGICGAAETLLVDAAVAKTHLKPLVEALLESGCAVRGDAATQGVDPRVTPADEADWRTEYLDAIISAKVVDGLDAAIAHIEANGSHHTDAIITDDTEAAARFLNEVDSAIVTHNASTQFADGGEFGFGAEIGIATGRMHARGPVGVEQLTTFKYRVHGSGQTRP.

It belongs to the gamma-glutamyl phosphate reductase family.

It is found in the cytoplasm. It carries out the reaction L-glutamate 5-semialdehyde + phosphate + NADP(+) = L-glutamyl 5-phosphate + NADPH + H(+). It functions in the pathway amino-acid biosynthesis; L-proline biosynthesis; L-glutamate 5-semialdehyde from L-glutamate: step 2/2. Functionally, catalyzes the NADPH-dependent reduction of L-glutamate 5-phosphate into L-glutamate 5-semialdehyde and phosphate. The product spontaneously undergoes cyclization to form 1-pyrroline-5-carboxylate. In Methylorubrum populi (strain ATCC BAA-705 / NCIMB 13946 / BJ001) (Methylobacterium populi), this protein is Gamma-glutamyl phosphate reductase.